Consider the following 247-residue polypeptide: Uridylate kinase (247 aa).

ATP is bound at residue lysine 18–glycine 21. Residue glycine 60 participates in UMP binding. Residues glycine 61 and arginine 65 each contribute to the ATP site. Residues aspartate 80 and threonine 141 to threonine 148 contribute to the UMP site. ATP-binding residues include threonine 168, tyrosine 174, and aspartate 177.

Belongs to the UMP kinase family. In terms of assembly, homohexamer.

The protein localises to the cytoplasm. It carries out the reaction UMP + ATP = UDP + ADP. The protein operates within pyrimidine metabolism; CTP biosynthesis via de novo pathway; UDP from UMP (UMPK route): step 1/1. Inhibited by UTP. Catalyzes the reversible phosphorylation of UMP to UDP. This Pseudomonas savastanoi pv. phaseolicola (strain 1448A / Race 6) (Pseudomonas syringae pv. phaseolicola (strain 1448A / Race 6)) protein is Uridylate kinase.